A 434-amino-acid polypeptide reads, in one-letter code: Transcriptional enhancer factor TEF-3 (434 aa).

A compositionally biased stretch (polar residues) spans 1–28 (MEGTAGTITSNEWSSPTSPEGSTASGGS). Disordered stretches follow at residues 1–42 (MEGT…AEGV) and 188–215 (QPPL…PPWQ). The segment at residues 36-112 (DNDAEGVWSP…QVLARRKARE (77 aa)) is a DNA-binding region (TEA). Residues 201 to 213 (GPAPSPSAPPAPP) are compositionally biased toward pro residues.

In terms of assembly, interacts with YAP1 and WWTR1/TAZ. Preferentially expressed in skeletal muscle. Lower levels in pancreas, placenta, and heart.

The protein localises to the nucleus. Functionally, transcription factor which plays a key role in the Hippo signaling pathway, a pathway involved in organ size control and tumor suppression by restricting proliferation and promoting apoptosis. The core of this pathway is composed of a kinase cascade wherein MST1/MST2, in complex with its regulatory protein SAV1, phosphorylates and activates LATS1/2 in complex with its regulatory protein MOB1, which in turn phosphorylates and inactivates YAP1 oncoprotein and WWTR1/TAZ. Acts by mediating gene expression of YAP1 and WWTR1/TAZ, thereby regulating cell proliferation, migration and epithelial mesenchymal transition (EMT) induction. Binds specifically and non-cooperatively to the Sph and GT-IIC 'enhansons' (5'-GTGGAATGT-3') and activates transcription. Binds to the M-CAT motif. This chain is Transcriptional enhancer factor TEF-3 (TEAD4), found in Homo sapiens (Human).